The chain runs to 504 residues: Probable alpha-L-arabinofuranosidase C (504 aa).

N-linked (GlcNAc...) asparagine glycans are attached at residues N152, N181, N269, and N467.

The protein belongs to the glycosyl hydrolase 51 family.

It is found in the secreted. The catalysed reaction is Hydrolysis of terminal non-reducing alpha-L-arabinofuranoside residues in alpha-L-arabinosides.. It functions in the pathway glycan metabolism; L-arabinan degradation. Functionally, alpha-L-arabinofuranosidase involved in the degradation of arabinoxylan, a major component of plant hemicellulose. Acts only on small linear 1,5-alpha-linked L-arabinofuranosyl oligosaccharides. This Aspergillus terreus (strain NIH 2624 / FGSC A1156) protein is Probable alpha-L-arabinofuranosidase C (abfC).